A 597-amino-acid chain; its full sequence is Elongation factor 4 (597 aa).

The tr-type G domain occupies Gln-2–Lys-184. GTP is bound by residues Asp-14–Thr-19 and Asn-131–Asp-134.

It belongs to the TRAFAC class translation factor GTPase superfamily. Classic translation factor GTPase family. LepA subfamily.

The protein resides in the cell inner membrane. It catalyses the reaction GTP + H2O = GDP + phosphate + H(+). Required for accurate and efficient protein synthesis under certain stress conditions. May act as a fidelity factor of the translation reaction, by catalyzing a one-codon backward translocation of tRNAs on improperly translocated ribosomes. Back-translocation proceeds from a post-translocation (POST) complex to a pre-translocation (PRE) complex, thus giving elongation factor G a second chance to translocate the tRNAs correctly. Binds to ribosomes in a GTP-dependent manner. In Bordetella bronchiseptica (strain ATCC BAA-588 / NCTC 13252 / RB50) (Alcaligenes bronchisepticus), this protein is Elongation factor 4.